The sequence spans 491 residues: Probable cytosol aminopeptidase (491 aa).

Mn(2+) contacts are provided by Lys-260 and Asp-265. Lys-272 is a catalytic residue. Mn(2+) is bound by residues Asp-284, Asp-343, and Glu-345. Arg-347 is an active-site residue.

Belongs to the peptidase M17 family. Mn(2+) serves as cofactor.

Its subcellular location is the cytoplasm. The enzyme catalyses Release of an N-terminal amino acid, Xaa-|-Yaa-, in which Xaa is preferably Leu, but may be other amino acids including Pro although not Arg or Lys, and Yaa may be Pro. Amino acid amides and methyl esters are also readily hydrolyzed, but rates on arylamides are exceedingly low.. It catalyses the reaction Release of an N-terminal amino acid, preferentially leucine, but not glutamic or aspartic acids.. In terms of biological role, presumably involved in the processing and regular turnover of intracellular proteins. Catalyzes the removal of unsubstituted N-terminal amino acids from various peptides. The protein is Probable cytosol aminopeptidase of Trichormus variabilis (strain ATCC 29413 / PCC 7937) (Anabaena variabilis).